Reading from the N-terminus, the 496-residue chain is WD repeat-containing protein 37 (496 aa).

2 stretches are compositionally biased toward polar residues: residues Met-1 to Gln-13 and Ser-22 to Ser-31. Residues Met-1–Leu-50 are disordered. The span at Glu-32–Asp-47 shows a compositional bias: basic and acidic residues. WD repeat units follow at residues Gly-154 to Lys-194 and Gly-197 to Gln-236. Residues Val-238–Ser-267 are disordered. Residues Gly-247–Val-265 are compositionally biased toward acidic residues. 5 WD repeats span residues Ser-281 to Ser-320, Gly-323 to Val-362, Gly-367 to Ala-405, Arg-408 to Leu-447, and Gly-454 to Glu-495.

In terms of assembly, forms homodimers. Interacts with PACS1. Interacts with PACS2.

It localises to the cytoplasm. The protein resides in the nucleus. Functionally, required for normal ER Ca2+ handling in lymphocytes. Together with PACS1, it plays an essential role in stabilizing peripheral lymphocyte populations. This is WD repeat-containing protein 37 (Wdr37) from Mus musculus (Mouse).